A 400-amino-acid chain; its full sequence is Cysteine desulfurase (400 aa).

Pyridoxal 5'-phosphate is bound by residues 71–72, N150, Q178, and 198–200; these read GT and SGH. K201 carries the post-translational modification N6-(pyridoxal phosphate)lysine. T236 provides a ligand contact to pyridoxal 5'-phosphate. The active-site Cysteine persulfide intermediate is C324. C324 is a [2Fe-2S] cluster binding site.

This sequence belongs to the class-V pyridoxal-phosphate-dependent aminotransferase family. NifS/IscS subfamily. Homodimer. Pyridoxal 5'-phosphate is required as a cofactor.

It carries out the reaction (sulfur carrier)-H + L-cysteine = (sulfur carrier)-SH + L-alanine. In terms of biological role, catalyzes the removal of elemental sulfur atoms from cysteine to produce alanine. Seems to participate in the biosynthesis of the nitrogenase metalloclusters by providing the inorganic sulfur required for the Fe-S core formation. This is Cysteine desulfurase from Nostoc sp. (strain PCC 7120 / SAG 25.82 / UTEX 2576).